A 544-amino-acid chain; its full sequence is MFS-type transporter prx5 (544 aa).

Positions 1–28 (MAVDTEKDSVQAGSPMETPGSPVDETTE) are disordered. A run of 13 helical transmembrane segments spans residues 36-56 (WIVS…IPVV), 90-110 (LDHL…VASA), 116-136 (VIAG…AAFA), 148-168 (IGVV…PVTA), 178-198 (AWNF…LLFL), 221-241 (GAFL…WAGV), 249-269 (VVAP…WESF), 290-310 (FTAP…SSIL), 330-350 (VILS…LTCF), 361-381 (LTGS…VTPT), 387-407 (IAFI…SIAI), 418-438 (GVSG…ATSI), and 505-525 (AIFV…AACL).

This sequence belongs to the major facilitator superfamily.

It is found in the cell membrane. Its function is as follows. MFS-type transporter; part of the gene cluster that mediates the biosynthesis of PR-toxin, a bicyclic sesquiterpene belonging to the eremophilane class and acting as a mycotoxin. The polypeptide is MFS-type transporter prx5 (Penicillium rubens (strain ATCC 28089 / DSM 1075 / NRRL 1951 / Wisconsin 54-1255) (Penicillium chrysogenum)).